The chain runs to 328 residues: Acyl-CoA wax alcohol acyltransferase 1 (328 aa).

A run of 2 helical transmembrane segments spans residues 12-32 (SLML…LQPL) and 34-53 (VYLL…AWLF).

It belongs to the diacylglycerol acyltransferase family. In terms of tissue distribution, predominantly expressed in skin, where it is limited to the sebaceous gland. Expressed in more mature, centrally located cells just before their rupture and sebum release. Also expressed in all tissues except spleen. Expressed at higher level in thymus, prostate and testis.

The protein resides in the endoplasmic reticulum membrane. It catalyses the reaction a long chain fatty alcohol + a fatty acyl-CoA = a wax ester + CoA. It carries out the reaction 1,2-di-(9Z-octadecenoyl)-sn-glycerol + (9Z)-octadecenoyl-CoA = 1,2,3-tri-(9Z-octadecenoyl)-glycerol + CoA. The enzyme catalyses hexadecan-1-ol + (9Z)-octadecenoyl-CoA = hexadecanyl (9Z)-octadecenoate + CoA. The catalysed reaction is decan-1-ol + (9Z)-octadecenoyl-CoA = 1-O-decyl-(9Z)-octadecenoate + CoA. It catalyses the reaction (9Z)-hexadecen-1-ol + (9Z)-octadecenoyl-CoA = 1-O-(9Z)-hexadecenyl (9Z)-octadecenoate + CoA. It carries out the reaction octadecan-1-ol + (9Z)-octadecenoyl-CoA = 1-O-octadecyl (9Z)-octadecenoate + CoA. The enzyme catalyses (9Z)-octadecen-1-ol + (9Z)-octadecenoyl-CoA = 1-O-(9Z)-octadecenyl (9Z)-octadecenoate + CoA. The catalysed reaction is hexadecan-1-ol + hexadecanoyl-CoA = hexadecanyl hexadecanoate + CoA. It catalyses the reaction hexadecan-1-ol + (9Z)-hexadecenoyl-CoA = 1-O-hexadecyl (9Z)-hexadecenoate + CoA. It carries out the reaction hexadecan-1-ol + octadecanoyl-CoA = hexadecanyl octadecanoate + CoA. The enzyme catalyses eicosan-1-ol + (9Z)-octadecenoyl-CoA = 1-O-eicosanyl (9Z)-octadecenoate + CoA. Functionally, acyltransferase that catalyzes the formation of ester bonds between fatty alcohols and fatty acyl-CoAs to form wax monoesters. Shows a strong preference for decyl alcohol (C10), with less activity towards C16 and C18 alcohols. Shows a strong preference for saturated acyl-CoAs. The protein is Acyl-CoA wax alcohol acyltransferase 1 (AWAT1) of Homo sapiens (Human).